A 694-amino-acid polypeptide reads, in one-letter code: Elongation factor G (694 aa).

Residues 8–284 (EKLRNIGIVA…AVIDFLPSPV (277 aa)) form the tr-type G domain. GTP is bound by residues 17 to 24 (AHIDAGKT), 81 to 85 (DTPGH), and 135 to 138 (NKMD).

This sequence belongs to the TRAFAC class translation factor GTPase superfamily. Classic translation factor GTPase family. EF-G/EF-2 subfamily.

The protein localises to the cytoplasm. In terms of biological role, catalyzes the GTP-dependent ribosomal translocation step during translation elongation. During this step, the ribosome changes from the pre-translocational (PRE) to the post-translocational (POST) state as the newly formed A-site-bound peptidyl-tRNA and P-site-bound deacylated tRNA move to the P and E sites, respectively. Catalyzes the coordinated movement of the two tRNA molecules, the mRNA and conformational changes in the ribosome. This is Elongation factor G from Persephonella marina (strain DSM 14350 / EX-H1).